We begin with the raw amino-acid sequence, 84 residues long: U4-theraphotoxin-Hhn1a (84 aa).

Positions 1-22 (MKVTLIAIPTCAAVLVLHTTAA) are cleaved as a signal peptide. The propeptide occupies 23-47 (EELEESQLMEVGMPDTELAAVDEER). Cystine bridges form between Cys-51-Cys-65, Cys-55-Cys-76, and Cys-70-Cys-81.

The protein belongs to the neurotoxin 12 (Hwtx-2) family. 02 (Hwtx-2) subfamily. Expressed by the venom gland.

The protein localises to the secreted. Its function is as follows. Postsynaptic neurotoxin. The chain is U4-theraphotoxin-Hhn1a from Cyriopagopus hainanus (Chinese bird spider).